Reading from the N-terminus, the 525-residue chain is MAPTIFVDHCILTTTFVASLFAFLLLYVLRRRSKTIHGSVNVRNGTLTVKSGTDVDIIIVGAGVAGAALAHTLGKEGRRVHVIERDLTEPDRIVGELLQPGGYLKLIELGLEDCVKDIDAQRVLGYALFKDGKHTKLSYPLDQFDSDVAGRSFHNGRFVQRMREKASLLPNVRMEQGTVTSLVEENGIIKGVQYKTKDGQELKSFAPLTIVCDGCFSNLRRSLCKPKVEVPSNFVGLVLENCELPFPNHGHVVLGDPSPILFYPISSSEVRCLVDVPGSKLPSVASGEMAHHLKTMVAPQVPPQIRDAFISAVEKGNIRTMPNRSMPADPIHTPGALLLGDAFNMRHPLTGGGMTVALSDIVILRDLLNPLVDLTNKESLSKYIESFYTLRKPVASTINTLAGALYKVFLASPDDARSEMRRACFDYLSLGGVCSSGPVALLSGLNPRPMSLVLHFFAVAIFGVGRLLVPLPSVKRLWLGARLISSASGIIFPIIKAEGVRQMFFPRTIPAIYRAPPTPSSSSPQ.

Residues 9–29 (HCILTTTFVASLFAFLLLYVL) form a helical membrane-spanning segment. FAD is bound by residues 64-65 (VA), 84-85 (ER), Arg-92, Arg-163, Val-179, Asp-341, and Met-354. Helical transmembrane passes span 452 to 472 (LVLHFFAVAIFGVGRLLVPLP) and 477 to 497 (LWLGARLISSASGIIFPIIKA).

Belongs to the squalene monooxygenase family. Requires FAD as cofactor. As to expression, expressed in seedlings, leaves, stems, inflorescences and siliques.

It is found in the membrane. The enzyme catalyses squalene + reduced [NADPH--hemoprotein reductase] + O2 = (S)-2,3-epoxysqualene + oxidized [NADPH--hemoprotein reductase] + H2O + H(+). It functions in the pathway terpene metabolism; lanosterol biosynthesis; lanosterol from farnesyl diphosphate: step 2/3. Catalyzes the stereospecific oxidation of squalene to (S)-2,3-epoxysqualene, and is considered to be a rate-limiting enzyme in steroid biosynthesis. Can produce not only oxidosqualene, but also 2,3:22,23-dioxidosqualene. This is Squalene epoxidase 3 (SQE3) from Arabidopsis thaliana (Mouse-ear cress).